The primary structure comprises 214 residues: MEEDLLGICGFDSSKKYRLEELAKYQSGSCIEFEDDDEMAVDYPCPFCSDDYDLVELCHHIDEEHQLDANNGICPVCSRRVKMHMVDHITTQHRDVFKRLYKDESYSAFSPGTRKYLQSLIDEPLSTNHTSKSVLDPLLSFIYNPPSPKKSKLVQPDSSSEASMEDNSLIRDSTEKDWESPSPLSDTELLEKAKKREFVQGLISSAIFDHIYNF.

Residue S110 is modified to Phosphoserine. A disordered region spans residues 148 to 185 (PKKSKLVQPDSSSEASMEDNSLIRDSTEKDWESPSPLS). Polar residues predominate over residues 156–166 (PDSSSEASMED). Positions 168 to 179 (SLIRDSTEKDWE) are enriched in basic and acidic residues.

This sequence belongs to the Di19 family. Phosphorylated in vitro by CPK3 or CPK11. As to expression, expressed in seedlings, roots, leaves, stems, flowers and siliques.

It is found in the nucleus. The protein is Protein DEHYDRATION-INDUCED 19 homolog 5 (DI19-5) of Arabidopsis thaliana (Mouse-ear cress).